Here is a 459-residue protein sequence, read N- to C-terminus: Cysteine--tRNA ligase (459 aa).

C27 is a Zn(2+) binding site. Positions P29–N39 match the 'HIGH' region motif. 3 residues coordinate Zn(2+): C211, H236, and E240. The 'KMSKS' region motif lies at K269–S273. K272 is an ATP binding site.

Belongs to the class-I aminoacyl-tRNA synthetase family. In terms of assembly, monomer. Requires Zn(2+) as cofactor.

The protein localises to the cytoplasm. It carries out the reaction tRNA(Cys) + L-cysteine + ATP = L-cysteinyl-tRNA(Cys) + AMP + diphosphate. The protein is Cysteine--tRNA ligase of Ehrlichia canis (strain Jake).